The primary structure comprises 82 residues: ATP synthase subunit c, chloroplastic (82 aa).

Helical transmembrane passes span 3–23 and 57–77; these read PIISAASVIGAGLSIGLAAIG and LAFMEALTIYGLVVALALLFA.

Belongs to the ATPase C chain family. In terms of assembly, F-type ATPases have 2 components, F(1) - the catalytic core - and F(0) - the membrane proton channel. F(1) has five subunits: alpha(3), beta(3), gamma(1), delta(1), epsilon(1). F(0) has four main subunits: a(1), b(1), b'(1) and c(10-14). The alpha and beta chains form an alternating ring which encloses part of the gamma chain. F(1) is attached to F(0) by a central stalk formed by the gamma and epsilon chains, while a peripheral stalk is formed by the delta, b and b' chains.

The protein resides in the plastid. The protein localises to the chloroplast thylakoid membrane. F(1)F(0) ATP synthase produces ATP from ADP in the presence of a proton or sodium gradient. F-type ATPases consist of two structural domains, F(1) containing the extramembraneous catalytic core and F(0) containing the membrane proton channel, linked together by a central stalk and a peripheral stalk. During catalysis, ATP synthesis in the catalytic domain of F(1) is coupled via a rotary mechanism of the central stalk subunits to proton translocation. Functionally, key component of the F(0) channel; it plays a direct role in translocation across the membrane. A homomeric c-ring of between 10-14 subunits forms the central stalk rotor element with the F(1) delta and epsilon subunits. This is ATP synthase subunit c, chloroplastic from Phaeodactylum tricornutum (strain CCAP 1055/1).